We begin with the raw amino-acid sequence, 340 residues long: Phosphoribosylformylglycinamidine cyclo-ligase (340 aa).

This sequence belongs to the AIR synthase family.

The protein resides in the cytoplasm. The catalysed reaction is 2-formamido-N(1)-(5-O-phospho-beta-D-ribosyl)acetamidine + ATP = 5-amino-1-(5-phospho-beta-D-ribosyl)imidazole + ADP + phosphate + H(+). Its pathway is purine metabolism; IMP biosynthesis via de novo pathway; 5-amino-1-(5-phospho-D-ribosyl)imidazole from N(2)-formyl-N(1)-(5-phospho-D-ribosyl)glycinamide: step 2/2. This is Phosphoribosylformylglycinamidine cyclo-ligase from Crocosphaera subtropica (strain ATCC 51142 / BH68) (Cyanothece sp. (strain ATCC 51142)).